Reading from the N-terminus, the 226-residue chain is Large ribosomal subunit protein uL1 (226 aa).

This sequence belongs to the universal ribosomal protein uL1 family. Part of the 50S ribosomal subunit.

Its function is as follows. Binds directly to 23S rRNA. The L1 stalk is quite mobile in the ribosome, and is involved in E site tRNA release. In terms of biological role, protein L1 is also a translational repressor protein, it controls the translation of the L11 operon by binding to its mRNA. The protein is Large ribosomal subunit protein uL1 of Borreliella burgdorferi (strain ATCC 35210 / DSM 4680 / CIP 102532 / B31) (Borrelia burgdorferi).